Consider the following 124-residue polypeptide: MTKIKQEIYNKRPTSPHLTIYKPQISSTLSILHRMTGVALFFVVSILVWWLILSKYDNNYLQLASCCIIKICLVAFSYSWCYHLCNGIRHLFWDIGYGFSIKAVNITGWCVVVCSILLTMLLWV.

The Cytoplasmic segment spans residues 1–29 (MTKIKQEIYNKRPTSPHLTIYKPQISSTL). A helical transmembrane segment spans residues 30 to 55 (SILHRMTGVALFFVVSILVWWLILSK). Topologically, residues 56 to 67 (YDNNYLQLASCC) are periplasmic. Residues 68-88 (IIKICLVAFSYSWCYHLCNGI) traverse the membrane as a helical segment. His83 contacts heme. Residues 89–103 (RHLFWDIGYGFSIKA) lie on the Cytoplasmic side of the membrane. A helical transmembrane segment spans residues 104 to 124 (VNITGWCVVVCSILLTMLLWV).

It belongs to the cytochrome b560 family. In terms of assembly, part of an enzyme complex containing four subunits: a flavoprotein, an iron-sulfur protein, plus two membrane-anchoring proteins, SdhC and SdhD. The complex can form homotrimers. The cofactor is heme.

Its subcellular location is the cell inner membrane. Its pathway is carbohydrate metabolism; tricarboxylic acid cycle. Membrane-anchoring subunit of succinate dehydrogenase (SDH). This is Succinate dehydrogenase cytochrome b556 subunit (sdhC) from Rickettsia prowazekii (strain Madrid E).